We begin with the raw amino-acid sequence, 62 residues long: Antitoxin VbhA (62 aa).

Positions Ser-20–Gly-25 match the Inhibitory (S/T)XXXE(G/N) motif motif. An ATP-binding site is contributed by Glu-24.

In terms of assembly, interacts with VbhT.

Its function is as follows. Antitoxin component of type II toxin-antitoxin (TA) system VbhT-VbhA. Acts by inhibiting the adenylyltransferase activity of VbhT; competes with ATP-binding and prevents productive ATP-binding to VbhT. The sequence is that of Antitoxin VbhA from Bartonella schoenbuchensis (strain DSM 13525 / NCTC 13165 / R1).